A 233-amino-acid chain; its full sequence is ATP synthase subunit a (233 aa).

6 helical membrane passes run 27–47, 85–105, 114–134, 143–163, 189–209, and 210–230; these read ANFV…FAIL, YLAF…IGVV, VPSV…IVGV, LAHF…IELV, VFLK…HVFV, and SFLQ…GAVA.

This sequence belongs to the ATPase A chain family. In terms of assembly, F-type ATPases have 2 components, CF(1) - the catalytic core - and CF(0) - the membrane proton channel. CF(1) has five subunits: alpha(3), beta(3), gamma(1), delta(1), epsilon(1). CF(0) has three main subunits: a(1), b(2) and c(9-12). The alpha and beta chains form an alternating ring which encloses part of the gamma chain. CF(1) is attached to CF(0) by a central stalk formed by the gamma and epsilon chains, while a peripheral stalk is formed by the delta and b chains.

The protein resides in the cell inner membrane. Key component of the proton channel; it plays a direct role in the translocation of protons across the membrane. This is ATP synthase subunit a from Solibacter usitatus (strain Ellin6076).